The following is a 196-amino-acid chain: Pyridoxine/pyridoxamine 5'-phosphate oxidase (196 aa).

Residues 46–51 (RNVLYK), 61–62 (FT), R67, K68, and Q90 contribute to the FMN site. K51 serves as a coordination point for substrate. Substrate-binding residues include Y108, R112, and S116. FMN contacts are provided by residues 125-126 (QS) and W169. 175-177 (RLH) is a binding site for substrate. R179 contributes to the FMN binding site.

This sequence belongs to the pyridoxamine 5'-phosphate oxidase family. In terms of assembly, homodimer. FMN is required as a cofactor.

It carries out the reaction pyridoxamine 5'-phosphate + O2 + H2O = pyridoxal 5'-phosphate + H2O2 + NH4(+). It catalyses the reaction pyridoxine 5'-phosphate + O2 = pyridoxal 5'-phosphate + H2O2. It participates in cofactor metabolism; pyridoxal 5'-phosphate salvage; pyridoxal 5'-phosphate from pyridoxamine 5'-phosphate: step 1/1. Its pathway is cofactor metabolism; pyridoxal 5'-phosphate salvage; pyridoxal 5'-phosphate from pyridoxine 5'-phosphate: step 1/1. Functionally, catalyzes the oxidation of either pyridoxine 5'-phosphate (PNP) or pyridoxamine 5'-phosphate (PMP) into pyridoxal 5'-phosphate (PLP). The chain is Pyridoxine/pyridoxamine 5'-phosphate oxidase from Coxiella burnetii (strain RSA 493 / Nine Mile phase I).